The sequence spans 44 residues: APEDSQSHQVSLSKQPASQAGGDPTGPKESKKKVESETETDPVP.

Residues 1–44 form a disordered region; sequence APEDSQSHQVSLSKQPASQAGGDPTGPKESKKKVESETETDPVP. A compositionally biased stretch (polar residues) spans 7-18; the sequence is SHQVSLSKQPAS. Lysine 14 is covalently cross-linked (Glycyl lysine isopeptide (Lys-Gly) (interchain with G-Cter in ubiquitin)). The Cell attachment site signature appears at 21-23; the sequence is GGD. Over residues 26–36 the composition is skewed to basic and acidic residues; sequence GPKESKKKVES.

It belongs to the lentiviruses Tat family. As to quaternary structure, interacts with host CCNT1. Associates with the P-TEFb complex composed at least of Tat, P-TEFb (CDK9 and CCNT1), TAR RNA, RNA Pol II. Recruits the HATs CREBBP, TAF1/TFIID, EP300, PCAF and GCN5L2. Interacts with host KAT5/Tip60; this interaction targets the latter to degradation. Interacts with the host deacetylase SIRT1. Interacts with host capping enzyme RNGTT; this interaction stimulates RNGTT. Binds to host KDR, and to the host integrins ITGAV/ITGB3 and ITGA5/ITGB1. Interacts with host KPNB1/importin beta-1 without previous binding to KPNA1/importin alpha-1. Interacts with EIF2AK2. Interacts with host nucleosome assembly protein NAP1L1; this interaction may be required for the transport of Tat within the nucleus, since the two proteins interact at the nuclear rim. Interacts with host C1QBP/SF2P32; this interaction involves lysine-acetylated Tat. Interacts with the host chemokine receptors CCR2, CCR3 and CXCR4. Interacts with host DPP4/CD26; this interaction may trigger an anti-proliferative effect. Interacts with host LDLR. Interacts with the host extracellular matrix metalloproteinase MMP1. Interacts with host PRMT6; this interaction mediates Tat's methylation. Interacts with, and is ubiquitinated by MDM2/Hdm2. Interacts with host PSMC3 and HTATIP2. Interacts with STAB1; this interaction may overcome SATB1-mediated repression of IL2 and IL2RA (interleukin) in T cells by binding to the same domain than HDAC1. Interacts (when acetylated) with human CDK13, thereby increasing HIV-1 mRNA splicing and promoting the production of the doubly spliced HIV-1 protein Nef. Post-translationally, acetylation by EP300, CREBBP, GCN5L2/GCN5 and PCAF regulates the transactivation activity of Tat. In terms of processing, phosphorylated by EIF2AK2 on serine and threonine residues adjacent to the basic region important for TAR RNA binding and function. Phosphorylation of Tat by EIF2AK2 is dependent on the prior activation of EIF2AK2 by dsRNA. Asymmetrical arginine methylation by host PRMT6 seems to diminish the transactivation capacity of Tat and affects the interaction with host CCNT1. Post-translationally, polyubiquitination by MDM2 does not target Tat to degradation, but activates its transactivation function and fosters interaction with CCNT1 and TAR RNA.

It is found in the host nucleus. It localises to the host nucleolus. The protein localises to the host cytoplasm. Its subcellular location is the secreted. Its function is as follows. Transcriptional activator that increases RNA Pol II processivity, thereby increasing the level of full-length viral transcripts. Recognizes a hairpin structure at the 5'-LTR of the nascent viral mRNAs referred to as the transactivation responsive RNA element (TAR) and recruits the cyclin T1-CDK9 complex (P-TEFb complex) that will in turn hyperphosphorylate the RNA polymerase II to allow efficient elongation. The CDK9 component of P-TEFb and other Tat-activated kinases hyperphosphorylate the C-terminus of RNA Pol II that becomes stabilized and much more processive. Other factors such as HTATSF1/Tat-SF1, SUPT5H/SPT5, and HTATIP2 are also important for Tat's function. Besides its effect on RNA Pol II processivity, Tat induces chromatin remodeling of proviral genes by recruiting the histone acetyltransferases (HATs) CREBBP, EP300 and PCAF to the chromatin. This also contributes to the increase in proviral transcription rate, especially when the provirus integrates in transcriptionally silent region of the host genome. To ensure maximal activation of the LTR, Tat mediates nuclear translocation of NF-kappa-B by interacting with host RELA. Through its interaction with host TBP, Tat may also modulate transcription initiation. Tat can reactivate a latently infected cell by penetrating in it and transactivating its LTR promoter. In the cytoplasm, Tat is thought to act as a translational activator of HIV-1 mRNAs. Extracellular circulating Tat can be endocytosed by surrounding uninfected cells via the binding to several surface receptors such as CD26, CXCR4, heparan sulfate proteoglycans (HSPG) or LDLR. Neurons are rarely infected, but they internalize Tat via their LDLR. Endosomal low pH allows Tat to cross the endosome membrane to enter the cytosol and eventually further translocate into the nucleus, thereby inducing severe cell dysfunctions ranging from cell activation to cell death. Through its interaction with nuclear HATs, Tat is potentially able to control the acetylation-dependent cellular gene expression. Tat seems to inhibit the HAT activity of KAT5/Tip60 and TAF1, and consequently modify the expression of specific cellular genes. Modulates the expression of many cellular genes involved in cell survival, proliferation or in coding for cytokines (such as IL10) or cytokine receptors. May be involved in the derepression of host interleukin IL2 expression. Mediates the activation of cyclin-dependent kinases and dysregulation of microtubule network. Tat plays a role in T-cell and neurons apoptosis. Tat induced neurotoxicity and apoptosis probably contribute to neuroAIDS. Host extracellular matrix metalloproteinase MMP1 cleaves Tat and decreases Tat's mediated neurotoxicity. Circulating Tat also acts as a chemokine-like and/or growth factor-like molecule that binds to specific receptors on the surface of the cells, affecting many cellular pathways. In the vascular system, Tat binds to ITGAV/ITGB3 and ITGA5/ITGB1 integrins dimers at the surface of endothelial cells and competes with bFGF for heparin-binding sites, leading to an excess of soluble bFGF. Binds to KDR/VEGFR-2. All these Tat-mediated effects enhance angiogenesis in Kaposi's sarcoma lesions. This is Protein Tat from Human immunodeficiency virus type 1 group M subtype B (isolate BRVA) (HIV-1).